The primary structure comprises 314 residues: tRNA dimethylallyltransferase (314 aa).

11-18 (GPTAVGKT) is a binding site for ATP. Residue 13 to 18 (TAVGKT) participates in substrate binding. The interval 36-39 (DSMQ) is interaction with substrate tRNA.

Belongs to the IPP transferase family. As to quaternary structure, monomer. Mg(2+) serves as cofactor.

It carries out the reaction adenosine(37) in tRNA + dimethylallyl diphosphate = N(6)-dimethylallyladenosine(37) in tRNA + diphosphate. Functionally, catalyzes the transfer of a dimethylallyl group onto the adenine at position 37 in tRNAs that read codons beginning with uridine, leading to the formation of N6-(dimethylallyl)adenosine (i(6)A). The sequence is that of tRNA dimethylallyltransferase from Bacillus anthracis.